The following is a 338-amino-acid chain: Ferrochelatase (338 aa).

Fe cation-binding residues include H189 and E294.

Belongs to the ferrochelatase family.

Its subcellular location is the cytoplasm. The catalysed reaction is heme b + 2 H(+) = protoporphyrin IX + Fe(2+). Its pathway is porphyrin-containing compound metabolism; protoheme biosynthesis; protoheme from protoporphyrin-IX: step 1/1. Functionally, catalyzes the ferrous insertion into protoporphyrin IX. This is Ferrochelatase from Pseudomonas putida (strain ATCC 47054 / DSM 6125 / CFBP 8728 / NCIMB 11950 / KT2440).